Reading from the N-terminus, the 520-residue chain is Legumin A2 (520 aa).

The signal sequence occupies residues 1 to 22 (MATKLLALSLSFCFLLLGGCFA). 2 disulfides stabilise this stretch: Cys32/Cys65 and Cys108/Cys342. The Cupin type-1 1 domain maps to 37-233 (LNALEPDNRI…AFNVNRHIVD (197 aa)). The segment at 250–339 (VKGGLSIISP…RRQGDNGLEE (90 aa)) is disordered. The Cupin type-1 2 domain occupies 348 to 497 (LNIGPSSSPD…TFNLQRNEAR (150 aa)).

Belongs to the 11S seed storage protein (globulins) family. In terms of assembly, hexamer; each subunit is composed of an acidic and a basic chain derived from a single precursor and linked by a disulfide bond.

This protein found in the seeds of many leguminous and non-leguminous plants is the source of sulfur-containing amino acids in seed meals. The polypeptide is Legumin A2 (LEGA2) (Pisum sativum (Garden pea)).